Consider the following 292-residue polypeptide: Elongation factor Ts (292 aa).

An involved in Mg(2+) ion dislocation from EF-Tu region spans residues 80-83 (TDFV).

This sequence belongs to the EF-Ts family.

The protein resides in the cytoplasm. Associates with the EF-Tu.GDP complex and induces the exchange of GDP to GTP. It remains bound to the aminoacyl-tRNA.EF-Tu.GTP complex up to the GTP hydrolysis stage on the ribosome. This is Elongation factor Ts from Pediococcus pentosaceus (strain ATCC 25745 / CCUG 21536 / LMG 10740 / 183-1w).